A 253-amino-acid polypeptide reads, in one-letter code: uncharacterized protein (253 aa).

This is an uncharacterized protein from Campylobacter jejuni subsp. jejuni serotype O:2 (strain ATCC 700819 / NCTC 11168).